Here is a 176-residue protein sequence, read N- to C-terminus: NAD(P)H-quinone oxidoreductase subunit 6, chloroplastic (176 aa).

A run of 5 helical transmembrane segments spans residues 10–30, 32–52, 61–81, 92–112, and 152–172; these read ILLV…VLLT, PISS…FYIP, AQLL…VMFM, LWTI…FSLI, and FYLP…GAIA.

The protein belongs to the complex I subunit 6 family. As to quaternary structure, NDH is composed of at least 16 different subunits, 5 of which are encoded in the nucleus.

The protein resides in the plastid. Its subcellular location is the chloroplast thylakoid membrane. It carries out the reaction a plastoquinone + NADH + (n+1) H(+)(in) = a plastoquinol + NAD(+) + n H(+)(out). The enzyme catalyses a plastoquinone + NADPH + (n+1) H(+)(in) = a plastoquinol + NADP(+) + n H(+)(out). Functionally, NDH shuttles electrons from NAD(P)H:plastoquinone, via FMN and iron-sulfur (Fe-S) centers, to quinones in the photosynthetic chain and possibly in a chloroplast respiratory chain. The immediate electron acceptor for the enzyme in this species is believed to be plastoquinone. Couples the redox reaction to proton translocation, and thus conserves the redox energy in a proton gradient. This chain is NAD(P)H-quinone oxidoreductase subunit 6, chloroplastic (ndhG), found in Chloranthus spicatus (Chulantree).